Consider the following 416-residue polypeptide: Enterobactin exporter EntS (416 aa).

Residues 1 to 21 (MNKQSWLLNLSLLKTHPAFRA) lie on the Cytoplasmic side of the membrane. Residues 22–42 (VFLARFISIVSLGLLGVAVPV) form a helical membrane-spanning segment. At 43-55 (QIQMMTHSTWQVG) the chain is on the periplasmic side. The helical transmembrane segment at 56–76 (LSVTLTGGAMFVGLMVGGVLA) threads the bilayer. At 77–83 (DRYERKK) the chain is on the cytoplasmic side. Residues 84-104 (VILLARGTCGIGFIGLCLNAL) traverse the membrane as a helical segment. The Periplasmic portion of the chain corresponds to 105–109 (LPEPS). A helical transmembrane segment spans residues 110 to 130 (LLAIYLLGLWDGFFASLGVTA). Residues 131-156 (LLAATPALVGRENLMQAGAITMLTVR) lie on the Cytoplasmic side of the membrane. Residues 157–177 (LGSVISPMIGGLLLATGGVAW) traverse the membrane as a helical segment. Residue asparagine 178 is a topological domain, periplasmic. Residues 179–199 (YGLAAAGTFITLLPLLSLPAL) traverse the membrane as a helical segment. Topologically, residues 200-218 (PPPPQPREHPLKSLLAGFR) are cytoplasmic. Residues 219–239 (FLLASPLVGGIALLGGLLTMA) form a helical membrane-spanning segment. Residues 240–256 (SAVRVLYPALADNWQMS) are Periplasmic-facing. The helical transmembrane segment at 257–277 (AAQIGFLYAAIPLGAAIGALT) threads the bilayer. Residues 278-287 (SGKLAHSARP) are Cytoplasmic-facing. The chain crosses the membrane as a helical span at residues 288 to 307 (GLLMLLSTLGSFLAIGLFGL). Over 308 to 313 (MPMWIL) the chain is Periplasmic. The chain crosses the membrane as a helical span at residues 314-336 (GVVCLALFGWLSAVSSLLQYTML). Over 337-356 (QTQTPEAMLGRINGLWTAQN) the chain is Cytoplasmic. Residues 357–377 (VTGDAIGAALLGGLGAMMTPV) traverse the membrane as a helical segment. Alanine 378 is a topological domain (periplasmic). Residues 379–399 (SASASGFGLLIIGVLLLLVLV) form a helical membrane-spanning segment. At 400–416 (ELRRFRQTPPQVTASDG) the chain is on the cytoplasmic side.

It belongs to the major facilitator superfamily. EntS (TC 2.A.1.38) family.

It is found in the cell inner membrane. Functionally, component of an export pathway for enterobactin. The polypeptide is Enterobactin exporter EntS (Escherichia coli O157:H7).